The primary structure comprises 390 residues: Cell adhesion molecule 4 (390 aa).

The first 27 residues, 1-27, serve as a signal peptide directing secretion; it reads MAPALTALNRCFVLGILLLVTAGTAFS. Residues 28–122 form the Ig-like V-type domain; the sequence is QEVQAENVTV…DTHHQIATLT (95 aa). The Extracellular segment spans residues 28–326; sequence QEVQAENVTV…IEAQTQVPYA (299 aa). 2 N-linked (GlcNAc...) asparagine glycosylation sites follow: Asn34 and Asn70. Intrachain disulfides connect Cys47-Cys107, Cys148-Cys202, and Cys247-Cys293. Ig-like C2-type domains are found at residues 127–219 and 226–309; these read PDNP…TQYE and PTAS…YVLV. Residues Asn264 and Asn288 are each glycosylated (N-linked (GlcNAc...) asparagine). A helical membrane pass occupies residues 327–347; sequence VIGGILALLVFLVICILIVMV. Topologically, residues 348–390 are cytoplasmic; sequence WCSVRQKGSYLTHEASGLDEHGEAREAFLNGGENHKRKEEFFI.

Belongs to the nectin family.

It is found in the membrane. In terms of biological role, involved in the cell-cell adhesion. The sequence is that of Cell adhesion molecule 4 (cadm4) from Xenopus laevis (African clawed frog).